The sequence spans 165 residues: Large ribosomal subunit protein uL15 (165 aa).

The tract at residues 1–44 is disordered; the sequence is MSLNQLKAPRGANRAKKRVGRGQGSGLGKTAGRGGKGQKARSGN. The segment covering 21–37 has biased composition (gly residues); it reads RGQGSGLGKTAGRGGKG.

This sequence belongs to the universal ribosomal protein uL15 family. In terms of assembly, part of the 50S ribosomal subunit.

Binds to the 23S rRNA. In Anaeromyxobacter dehalogenans (strain 2CP-1 / ATCC BAA-258), this protein is Large ribosomal subunit protein uL15.